The chain runs to 274 residues: MSQSSVDIPPKGGFSFDLCKRNDMLTQKGLKAPSFLKTGTTIVGLIFKDGVILGADTRATEGPIVADKNCEKIHYMAPNIYCCGAGTAADTEAVTDMVSSQLRLHRYQTGRDSRVVTALTLLKKHLFSYQGHVSAALVLGGVDITGPHLHTIYPHGSTDTLPFATMGSGSLAAMSVFEAKYKEGLTRDEGIKLVAEAICSGIFNDLGSGSNVDICVITKGHKEYLRNYMEPNPRTYVSSKGYSFTKKTEVLLTKITPLLERVEIVEVAGEAMEE.

Residues 1 to 37 (MSQSSVDIPPKGGFSFDLCKRNDMLTQKGLKAPSFLK) constitute a propeptide, removed in mature form. Threonine 40 acts as the Nucleophile in catalysis.

It belongs to the peptidase T1B family. Component of the 20S core complex of the 26S proteasome. The 26S proteasome is composed of a core protease (CP), known as the 20S proteasome, capped at one or both ends by the 19S regulatory particle (RP/PA700). The 20S proteasome core is composed of 28 subunits that are arranged in four stacked rings, resulting in a barrel-shaped structure. The two end rings are each formed by seven alpha subunits, and the two central rings are each formed by seven beta subunits. The catalytic chamber with the active sites is on the inside of the barrel.

It localises to the cytoplasm. It is found in the nucleus. It catalyses the reaction Cleavage of peptide bonds with very broad specificity.. The proteasome is a multicatalytic proteinase complex which is characterized by its ability to cleave peptides with Arg, Phe, Tyr, Leu, and Glu adjacent to the leaving group at neutral or slightly basic pH. The proteasome has an ATP-dependent proteolytic activity. The sequence is that of Proteasome subunit beta type-7-B (PBB2) from Arabidopsis thaliana (Mouse-ear cress).